A 78-amino-acid polypeptide reads, in one-letter code: Small integral membrane protein 1 (78 aa).

At methionine 1 the chain carries N-acetylmethionine. The segment at methionine 1–serine 22 is disordered. The Cytoplasmic portion of the chain corresponds to methionine 1–glycine 48. Residues serine 6, serine 17, serine 22, and serine 27 each carry the phosphoserine modification. A compositionally biased stretch (basic and acidic residues) spans serine 11–valine 21. The helical; Signal-anchor for type II membrane protein transmembrane segment at isoleucine 49–isoleucine 69 threads the bilayer. Over threonine 70 to lysine 78 the chain is Extracellular.

It belongs to the SMIM1 family. Homooligomer; disulfide-linked.

Its subcellular location is the cell membrane. Functionally, regulator of red blood cell formation. The protein is Small integral membrane protein 1 of Mus musculus (Mouse).